We begin with the raw amino-acid sequence, 146 residues long: Prostaglandin E synthase 3 (146 aa).

In terms of domain architecture, CS spans 1–76 (VFIEFCVEDS…ESGQAWPRLT (76 aa)). Positions 110–146 (SEMMNNMGGDDDVDLPEVDGADDDSPDSDDEKMPDLE) are disordered. The segment covering 118-139 (GDDDVDLPEVDGADDDSPDSDD) has biased composition (acidic residues).

The protein belongs to the p23/wos2 family. As to quaternary structure, binds to telomerase. Binds to the progesterone receptor.

Its subcellular location is the cytoplasm. It carries out the reaction prostaglandin H2 = prostaglandin E2. Its pathway is lipid metabolism; prostaglandin biosynthesis. Functionally, molecular chaperone. The protein is Prostaglandin E synthase 3 (PTGES3) of Gallus gallus (Chicken).